The chain runs to 625 residues: Probable thymidylate synthase (625 aa).

The segment at 224–323 is disordered; that stretch reads AVKNIDGQDD…PEPPVPFTSS (100 aa). Over residues 243 to 257 the composition is skewed to acidic residues; sequence EEYDDDDDDDVDDNE. Polar residues-rich tracts occupy residues 258–269 and 293–312; these read QSNSMIETSANA and SQAP…NVTT. Residues Arg-350 and 477-478 contribute to the dUMP site; that span reads RR. Catalysis depends on Cys-497, which acts as the Nucleophile. DUMP-binding positions include 524-527, Asn-535, and 565-567; these read RSAD and HIY. Asp-527 contacts (6R)-5,10-methylene-5,6,7,8-tetrahydrofolate.

In the N-terminal section; belongs to the HFCD (homo-oligomeric flavin containing Cys decarboxylase) superfamily. The protein in the C-terminal section; belongs to the thymidylate synthase family.

The protein localises to the cytoplasm. It carries out the reaction dUMP + (6R)-5,10-methylene-5,6,7,8-tetrahydrofolate = 7,8-dihydrofolate + dTMP. The protein operates within pyrimidine metabolism; dTTP biosynthesis. In terms of biological role, required for both nuclear and mitochondrial DNA synthesis. The polypeptide is Probable thymidylate synthase (Schizosaccharomyces pombe (strain 972 / ATCC 24843) (Fission yeast)).